Here is a 355-residue protein sequence, read N- to C-terminus: tRNA pseudouridine synthase D (355 aa).

The Nucleophile role is filled by Asp-84. Residues 160–306 (GVPNYFGLQR…MAHERRILRL (147 aa)) form the TRUD domain.

It belongs to the pseudouridine synthase TruD family.

It catalyses the reaction uridine(13) in tRNA = pseudouridine(13) in tRNA. In terms of biological role, responsible for synthesis of pseudouridine from uracil-13 in transfer RNAs. The protein is tRNA pseudouridine synthase D of Pseudomonas aeruginosa (strain LESB58).